The chain runs to 322 residues: tRNA dimethylallyltransferase (322 aa).

Position 19–26 (19–26 (GPTASGKT)) interacts with ATP. Residue 21–26 (TASGKT) coordinates substrate. Interaction with substrate tRNA regions lie at residues 44–47 (DSAL), 168–172 (QRIQR), and 255–260 (RCVGYR).

Belongs to the IPP transferase family. Monomer. Requires Mg(2+) as cofactor.

The enzyme catalyses adenosine(37) in tRNA + dimethylallyl diphosphate = N(6)-dimethylallyladenosine(37) in tRNA + diphosphate. Its function is as follows. Catalyzes the transfer of a dimethylallyl group onto the adenine at position 37 in tRNAs that read codons beginning with uridine, leading to the formation of N6-(dimethylallyl)adenosine (i(6)A). The protein is tRNA dimethylallyltransferase of Cupriavidus necator (strain ATCC 17699 / DSM 428 / KCTC 22496 / NCIMB 10442 / H16 / Stanier 337) (Ralstonia eutropha).